The primary structure comprises 270 residues: tRNA pseudouridine synthase A (270 aa).

D51 serves as the catalytic Nucleophile. A substrate-binding site is contributed by Y109.

Belongs to the tRNA pseudouridine synthase TruA family. In terms of assembly, homodimer.

It catalyses the reaction uridine(38/39/40) in tRNA = pseudouridine(38/39/40) in tRNA. Formation of pseudouridine at positions 38, 39 and 40 in the anticodon stem and loop of transfer RNAs. The sequence is that of tRNA pseudouridine synthase A from Burkholderia vietnamiensis (strain G4 / LMG 22486) (Burkholderia cepacia (strain R1808)).